The sequence spans 362 residues: MSECLMFGMDCEARCMTSMTADEENICFLVGTNNIKNDKNQVNKLFMDPEASRLMSKTFRHPAGEVRAIAAHPTKSTILATCTADFSSLGGTHSITIWNIEEDKRTLETVSRLPTEQVMSCLEWEPNSMKCAAMTPFRPEIQLLNMENGPEIVQNLKIPLENEEDEMFSATWSPHHDGNMLGVTGGRTAWCIDCRTDNEYLKIRDAHIHRTISMDFNPNLQHVIATCGDDGYVRIWDTRSTSSALTSLHPHAHWVWSVRFHPVHDQLLLTGGSDASVVLSCAQSVSSEQQIEFRDDEEEEEDDDLVEKLQDGQLERIDEHEDSVYACAWSSADPWTFASLSYDGRMIVSNVSRKHKYALMQL.

WD repeat units lie at residues 61 to 108 (HPAG…RTLE), 206 to 246 (AHIH…SALT), 250 to 290 (PHAH…SEQQ), and 319 to 359 (EHED…KYAL).

It belongs to the WD repeat EIPR1 family. Expressed in the hypodermis and the pharynx.

It is found in the cytoplasm. Plays a role in the trafficking of cargo to dense-core vesicles, probably through association with the endosome-associated recycling protein (EARP) complex. Important for neuronal function. This is EARP-interacting protein 1 from Caenorhabditis elegans.